A 372-amino-acid chain; its full sequence is 4-hydroxy-3-methylbut-2-en-1-yl diphosphate synthase (flavodoxin) (372 aa).

[4Fe-4S] cluster contacts are provided by Cys-270, Cys-273, Cys-305, and Glu-312.

It belongs to the IspG family. The cofactor is [4Fe-4S] cluster.

The enzyme catalyses (2E)-4-hydroxy-3-methylbut-2-enyl diphosphate + oxidized [flavodoxin] + H2O + 2 H(+) = 2-C-methyl-D-erythritol 2,4-cyclic diphosphate + reduced [flavodoxin]. It participates in isoprenoid biosynthesis; isopentenyl diphosphate biosynthesis via DXP pathway; isopentenyl diphosphate from 1-deoxy-D-xylulose 5-phosphate: step 5/6. In terms of biological role, converts 2C-methyl-D-erythritol 2,4-cyclodiphosphate (ME-2,4cPP) into 1-hydroxy-2-methyl-2-(E)-butenyl 4-diphosphate. The protein is 4-hydroxy-3-methylbut-2-en-1-yl diphosphate synthase (flavodoxin) of Aliivibrio salmonicida (strain LFI1238) (Vibrio salmonicida (strain LFI1238)).